A 41-amino-acid polypeptide reads, in one-letter code: Divisome-associated membrane protein Blr (41 aa).

At Met-1–Arg-3 the chain is on the cytoplasmic side. The chain crosses the membrane as a helical span at residues Leu-4–Ser-24. At His-25–Lys-41 the chain is on the periplasmic side.

In terms of assembly, interacts with FtsL and several other divisomal proteins, including FtsI, FtsK, FtsN, FtsQ, FtsW and YmgF. Post-translationally, the N-terminus is blocked.

The protein resides in the cell inner membrane. Component of the cell division machinery, which is probably involved in the stabilization of the divisome under certain stress conditions. In Escherichia coli (strain K12), this protein is Divisome-associated membrane protein Blr (blr).